A 78-amino-acid polypeptide reads, in one-letter code: Large ribosomal subunit protein bL28 (78 aa).

This sequence belongs to the bacterial ribosomal protein bL28 family.

This chain is Large ribosomal subunit protein bL28, found in Thiobacillus denitrificans (strain ATCC 25259 / T1).